The primary structure comprises 492 residues: UDP-N-acetylmuramoyl-L-alanyl-D-glutamate--2,6-diaminopimelate ligase (492 aa).

S21 serves as a coordination point for UDP-N-acetyl-alpha-D-muramoyl-L-alanyl-D-glutamate. 98 to 104 (GTNGKSS) provides a ligand contact to ATP. Residues 144–145 (TT), S171, Q177, and R179 contribute to the UDP-N-acetyl-alpha-D-muramoyl-L-alanyl-D-glutamate site. At K211 the chain carries N6-carboxylysine. Meso-2,6-diaminopimelate-binding positions include R372, 396–399 (DNPR), G446, and E450. A Meso-diaminopimelate recognition motif motif is present at residues 396–399 (DNPR).

The protein belongs to the MurCDEF family. MurE subfamily. Mg(2+) serves as cofactor. In terms of processing, carboxylation is probably crucial for Mg(2+) binding and, consequently, for the gamma-phosphate positioning of ATP.

It localises to the cytoplasm. It carries out the reaction UDP-N-acetyl-alpha-D-muramoyl-L-alanyl-D-glutamate + meso-2,6-diaminopimelate + ATP = UDP-N-acetyl-alpha-D-muramoyl-L-alanyl-gamma-D-glutamyl-meso-2,6-diaminopimelate + ADP + phosphate + H(+). It participates in cell wall biogenesis; peptidoglycan biosynthesis. In terms of biological role, catalyzes the addition of meso-diaminopimelic acid to the nucleotide precursor UDP-N-acetylmuramoyl-L-alanyl-D-glutamate (UMAG) in the biosynthesis of bacterial cell-wall peptidoglycan. In Rickettsia typhi (strain ATCC VR-144 / Wilmington), this protein is UDP-N-acetylmuramoyl-L-alanyl-D-glutamate--2,6-diaminopimelate ligase.